The chain runs to 449 residues: Signal recognition particle protein (449 aa).

GTP-binding positions include 109–116 (GLQGGGKT), 191–195 (DTAGR), and 249–252 (SRID).

It belongs to the GTP-binding SRP family. SRP54 subfamily. As to quaternary structure, part of the signal recognition particle protein translocation system, which is composed of SRP and FtsY. SRP is a ribonucleoprotein composed of Ffh and a 4.5S RNA molecule.

Its subcellular location is the cytoplasm. The enzyme catalyses GTP + H2O = GDP + phosphate + H(+). Involved in targeting and insertion of nascent membrane proteins into the cytoplasmic membrane. Binds to the hydrophobic signal sequence of the ribosome-nascent chain (RNC) as it emerges from the ribosomes. The SRP-RNC complex is then targeted to the cytoplasmic membrane where it interacts with the SRP receptor FtsY. Interaction with FtsY leads to the transfer of the RNC complex to the Sec translocase for insertion into the membrane, the hydrolysis of GTP by both Ffh and FtsY, and the dissociation of the SRP-FtsY complex into the individual components. This is Signal recognition particle protein from Rickettsia typhi (strain ATCC VR-144 / Wilmington).